Consider the following 513-residue polypeptide: CUGBP Elav-like family member 2 (513 aa).

3 RRM domains span residues 35–118 (IKMF…PADS), 127–207 (RKLF…FADT), and 428–506 (ANLF…LKRS).

Belongs to the CELF/BRUNOL family.

The protein resides in the nucleus. It localises to the cytoplasm. RNA-binding protein implicated in the regulation of several post-transcriptional events. May be involved in pre-mRNA alternative splicing, mRNA translation repression and stability. The chain is CUGBP Elav-like family member 2 (celf2) from Xenopus tropicalis (Western clawed frog).